The primary structure comprises 242 residues: Phosphoribosyl isomerase A (242 aa).

Asp-12 functions as the Proton acceptor in the catalytic mechanism. Asp-131 acts as the Proton donor in catalysis.

The protein belongs to the HisA/HisF family.

Its subcellular location is the cytoplasm. It carries out the reaction 1-(5-phospho-beta-D-ribosyl)-5-[(5-phospho-beta-D-ribosylamino)methylideneamino]imidazole-4-carboxamide = 5-[(5-phospho-1-deoxy-D-ribulos-1-ylimino)methylamino]-1-(5-phospho-beta-D-ribosyl)imidazole-4-carboxamide. The catalysed reaction is N-(5-phospho-beta-D-ribosyl)anthranilate = 1-(2-carboxyphenylamino)-1-deoxy-D-ribulose 5-phosphate. Its pathway is amino-acid biosynthesis; L-histidine biosynthesis; L-histidine from 5-phospho-alpha-D-ribose 1-diphosphate: step 4/9. It functions in the pathway amino-acid biosynthesis; L-tryptophan biosynthesis; L-tryptophan from chorismate: step 3/5. Involved in both the histidine and tryptophan biosynthetic pathways. In Streptomyces avermitilis (strain ATCC 31267 / DSM 46492 / JCM 5070 / NBRC 14893 / NCIMB 12804 / NRRL 8165 / MA-4680), this protein is Phosphoribosyl isomerase A.